The sequence spans 61 residues: Bactridin-1 (61 aa).

An LCN-type CS-alpha/beta domain is found at 1 to 61; sequence KDGYIIEHRG…KIFDSNNLKC (61 aa). 4 disulfide bridges follow: Cys11–Cys61, Cys15–Cys37, Cys23–Cys42, and Cys27–Cys44.

Belongs to the long (4 C-C) scorpion toxin superfamily. Sodium channel inhibitor family. Beta subfamily. In terms of tissue distribution, expressed by the venom gland.

It is found in the secreted. Shows antibacterial activity against both Gram-positive bacteria (B.subtilis, M.luteus, E.faecalis) and Gram-negative bacteria (P.aeruginosa, Y.enterocolitica, A.calcoaceticus). Modifies membrane sodium permeability on Y.enterocolitica. Is toxic to cockroaches and crabs, but is not toxic to mice. Does not induce haemolysis in human erythrocytes. Acts by inhibiting the sodium (Nav) currents. The polypeptide is Bactridin-1 (Tityus discrepans (Venezuelan scorpion)).